The primary structure comprises 165 residues: E3 ubiquitin ligase complex SCF subunit sconC (165 aa).

Residues 106–165 (ILAANYLDIKALLDVGCKTVANMIKGKSPEEIRKTFNIQNDFTPEEEDQIRRENEWAEDR) form an interaction with the F-box domain of F-box proteins region.

Belongs to the SKP1 family. Component of the SCF (SKP1-CUL1-F-box protein) E3 ubiquitin ligase complexes.

It functions in the pathway protein modification; protein ubiquitination. Essential component of the SCF (SKP1-CUL1-F-box protein) E3 ubiquitin ligase complexes, which mediate the ubiquitination and subsequent proteasomal degradation of target proteins. Controls sulfur metabolite repression, probably by mediating the inactivation or degradation of the metR transcription factor. The protein is E3 ubiquitin ligase complex SCF subunit sconC (sconC) of Arthroderma otae (strain ATCC MYA-4605 / CBS 113480) (Microsporum canis).